The sequence spans 176 residues: Translation initiation factor IF-3 (176 aa).

Belongs to the IF-3 family. In terms of assembly, monomer.

The protein localises to the cytoplasm. IF-3 binds to the 30S ribosomal subunit and shifts the equilibrium between 70S ribosomes and their 50S and 30S subunits in favor of the free subunits, thus enhancing the availability of 30S subunits on which protein synthesis initiation begins. This is Translation initiation factor IF-3 from Nitratidesulfovibrio vulgaris (strain DSM 19637 / Miyazaki F) (Desulfovibrio vulgaris).